The following is a 270-amino-acid chain: MSDQQQPPVYKIALGIEYDGSKYYGWQRQNEVRSVQEKLEKALSQVANEPITVFCAGRTDAGVHGTGQVVHFETTALRKDAAWTLGVNANLPGDIAVRWVKTVPDDFHARFSATARRYRYIIYNHRLRPAVLSKGVTHFYEPLDAERMHRAAQCLLGENDFTSFRAVQCQSRTPWRNVMHINVTRHGPYVVVDIKANAFVHHMVRNIVGSLMEVGAHNQPESWIAELLAAKDRTLAAATAKAEGLYLVAVDYPDRYDLPKPPMGPLFLAD.

Catalysis depends on aspartate 60, which acts as the Nucleophile. Residues 107–111 (FHARF) are RNA binding. Tyrosine 118 contacts substrate. An interaction with tRNA region spans residues 168-172 (QCQSR).

The protein belongs to the tRNA pseudouridine synthase TruA family. Homodimer.

The catalysed reaction is uridine(38/39/40) in tRNA = pseudouridine(38/39/40) in tRNA. Its function is as follows. Formation of pseudouridine at positions 38, 39 and 40 in the anticodon stem and loop of transfer RNAs. This Escherichia coli (strain K12 / DH10B) protein is tRNA pseudouridine synthase A.